The following is a 274-amino-acid chain: tRNA-cytidine(32) 2-sulfurtransferase (274 aa).

The PP-loop motif signature appears at 40–45 (SGGKDS). The [4Fe-4S] cluster site is built by C115, C118, and C206.

The protein belongs to the TtcA family. Homodimer. It depends on Mg(2+) as a cofactor. Requires [4Fe-4S] cluster as cofactor.

Its subcellular location is the cytoplasm. It catalyses the reaction cytidine(32) in tRNA + S-sulfanyl-L-cysteinyl-[cysteine desulfurase] + AH2 + ATP = 2-thiocytidine(32) in tRNA + L-cysteinyl-[cysteine desulfurase] + A + AMP + diphosphate + H(+). It functions in the pathway tRNA modification. Catalyzes the ATP-dependent 2-thiolation of cytidine in position 32 of tRNA, to form 2-thiocytidine (s(2)C32). The sulfur atoms are provided by the cysteine/cysteine desulfurase (IscS) system. This is tRNA-cytidine(32) 2-sulfurtransferase from Pseudomonas putida (strain ATCC 47054 / DSM 6125 / CFBP 8728 / NCIMB 11950 / KT2440).